A 328-amino-acid polypeptide reads, in one-letter code: Biotin synthase (328 aa).

The 230-residue stretch at 53 to 282 (FHGNRVDLCA…ATTIRYAGGR (230 aa)) folds into the Radical SAM core domain. [4Fe-4S] cluster contacts are provided by cysteine 71, cysteine 75, and cysteine 78. 4 residues coordinate [2Fe-2S] cluster: serine 115, cysteine 147, cysteine 207, and arginine 277.

It belongs to the radical SAM superfamily. Biotin synthase family. Homodimer. The cofactor is [4Fe-4S] cluster. It depends on [2Fe-2S] cluster as a cofactor.

It catalyses the reaction (4R,5S)-dethiobiotin + (sulfur carrier)-SH + 2 reduced [2Fe-2S]-[ferredoxin] + 2 S-adenosyl-L-methionine = (sulfur carrier)-H + biotin + 2 5'-deoxyadenosine + 2 L-methionine + 2 oxidized [2Fe-2S]-[ferredoxin]. It functions in the pathway cofactor biosynthesis; biotin biosynthesis; biotin from 7,8-diaminononanoate: step 2/2. Catalyzes the conversion of dethiobiotin (DTB) to biotin by the insertion of a sulfur atom into dethiobiotin via a radical-based mechanism. This chain is Biotin synthase, found in Desulforudis audaxviator (strain MP104C).